The following is a 334-amino-acid chain: Testis-specific Y-encoded protein 1 (334 aa).

The residue at position 4 (S4) is a Phosphoserine. Disordered regions lie at residues L27–D46 and N96–R146. Composition is skewed to basic and acidic residues over residues N96–G108 and E115–D128.

The protein belongs to the nucleosome assembly protein (NAP) family. Phosphorylated. As to expression, testis.

The protein resides in the cytoplasm. Its subcellular location is the nucleus. In terms of biological role, may be involved in sperm differentiation and proliferation. The polypeptide is Testis-specific Y-encoded protein 1 (Tspy1) (Rattus norvegicus (Rat)).